The primary structure comprises 605 residues: Tungsten-containing aldehyde ferredoxin oxidoreductase (605 aa).

The tungstopterin site is built by arginine 76, asparagine 93, glycine 95, arginine 182, alanine 183, glycine 185, and arginine 186. Residues cysteine 288, cysteine 291, and cysteine 295 each coordinate [4Fe-4S] cluster. Tungstopterin-binding residues include aspartate 338, leucine 342, aspartate 343, arginine 444, lysine 450, aspartate 489, and leucine 493. Position 494 (cysteine 494) interacts with [4Fe-4S] cluster. Leucine 495 contacts tungstopterin.

The protein belongs to the AOR/FOR family. Monomer. Homodimer. The cofactor is [4Fe-4S] cluster. Requires tungstopterin as cofactor.

The catalysed reaction is an aldehyde + 2 oxidized [2Fe-2S]-[ferredoxin] + H2O = a carboxylate + 2 reduced [2Fe-2S]-[ferredoxin] + 3 H(+). With respect to regulation, inhibited by arsenite, iodoacetate and cyanide. In terms of biological role, aldehyde ferredoxin oxidoreductase with a broad substrate specificity. Catalyzes the oxidation of a range of aliphatic aldehydes to their corresponding carboxylic acids. In vitro can use crotonaldehyde, acetaldehyde, formaldehyde, butyraldehyde or glyceraldehyde as substrate, using methyl viologen or ferredoxin, but not NAD(P), as the electron acceptor. Does not oxidize glucose or glyceraldehyde 3-phosphate. May be involved in a pyroglycolytic pathway. The protein is Tungsten-containing aldehyde ferredoxin oxidoreductase of Pyrococcus furiosus (strain ATCC 43587 / DSM 3638 / JCM 8422 / Vc1).